A 591-amino-acid chain; its full sequence is DEAD-box ATP-dependent RNA helicase 35 (591 aa).

Residues 146–174 carry the Q motif motif; it reads KNFKDMKFPRPVLDTLKEKGIVQPTPIQV. The Helicase ATP-binding domain occupies 177–361; sequence LPVILAGRDM…RSALVKPVTV (185 aa). ATP is bound at residue 190 to 197; sequence AFTGSGKT. A DEAD box motif is present at residues 309-312; that stretch reads DEAD. A Helicase C-terminal domain is found at 372-532; that stretch reads DVIQEVEYVK…RIPPVLAELN (161 aa). The segment at 548-565 adopts a CCHC-type zinc-finger fold; that stretch reads KGCAYCGGLGHRIRDCPK.

It belongs to the DEAD box helicase family. DDX41 subfamily.

The enzyme catalyses ATP + H2O = ADP + phosphate + H(+). The chain is DEAD-box ATP-dependent RNA helicase 35 (RH35) from Arabidopsis thaliana (Mouse-ear cress).